A 210-amino-acid chain; its full sequence is Somatotropin (210 aa).

The first 22 residues, 1–22, serve as a signal peptide directing secretion; the sequence is MAKALVLLSLVLVSVFVNNGTA. H38 lines the Zn(2+) pocket. An intrachain disulfide couples C71 to C183. Zn(2+) is bound at residue E192. An intrachain disulfide couples C200 to C208.

This sequence belongs to the somatotropin/prolactin family.

It localises to the secreted. Its function is as follows. Growth hormone plays an important role in growth control and is involved in the regulation of several anabolic processes. Implicated as an osmoregulatory substance important for seawater adaptation. This is Somatotropin (gh) from Misgurnus mizolepis (Chinese weatherloach).